Reading from the N-terminus, the 309-residue chain is Malate dehydrogenase (309 aa).

NAD(+)-binding positions include 9 to 14 (GAGFVG) and D33. Residues R82 and R88 each coordinate substrate. Residues N95 and 118-120 (VNN) each bind NAD(+). Substrate-binding residues include N120 and R151. H175 serves as the catalytic Proton acceptor.

Belongs to the LDH/MDH superfamily. MDH type 3 family.

The enzyme catalyses (S)-malate + NAD(+) = oxaloacetate + NADH + H(+). In terms of biological role, catalyzes the reversible oxidation of malate to oxaloacetate. This is Malate dehydrogenase from Chloroflexus aggregans (strain MD-66 / DSM 9485).